Here is a 215-residue protein sequence, read N- to C-terminus: Nascent polypeptide-associated complex subunit alpha (215 aa).

Residues 1-81 (MPGEATETVP…SEKKARKAMS (81 aa)) are disordered. Polar residues predominate over residues 9 to 28 (VPATEQELPQPQAETGSGTE). A compositionally biased stretch (acidic residues) spans 29–42 (SDSDESVPELEEQD). Ser-43 is subject to Phosphoserine; by ILK1. Over residues 44-57 (TQATTQQAQLAAAA) the composition is skewed to low complexity. The interval 69 to 80 (QSRSEKKARKAM) is required for DNA-binding. The NAC-A/B domain maps to 70–135 (SRSEKKARKA…AKIEDLSQQA (66 aa)). Residues 93–108 (RVTIRKSKNILFVITK) form an RNA/DNA-binding region. Ser-132 carries the post-translational modification Phosphoserine. Lys-142 is modified (N6-acetyllysine; alternate). Residue Lys-142 forms a Glycyl lysine isopeptide (Lys-Gly) (interchain with G-Cter in SUMO2); alternate linkage. Thr-159 is subject to Phosphothreonine; by GSK3-beta. Thr-161 carries the phosphothreonine modification. Residues Ser-166, Ser-186, Ser-191, and Ser-203 each carry the phosphoserine modification. One can recognise a UBA domain in the interval 176 to 213 (VEVKDIELVMSQANVSRAKAVRALKNNSNDIVNAIMEL).

The protein belongs to the NAC-alpha family. Interacts with TBP and JUN. Part of the nascent polypeptide-associated complex (NAC), which is a heterodimer of NACA and BTF3 (via NAC-A/B domains). NAC associates with ribosomes through the BTF3/NACB subunit and contacts the ribosomal protein L23, which is positioned near the exiting site. Both subunits can contact nascent polypeptide chains. NACA may also form homodimers, and only this form binds DNA. Post-translationally, phosphorylation of Thr-159 by GSK3B may promote proteasome mediated degradation. Phosphorylation of Ser-43 by ILK during cell adhesion may promote nuclear localization. As to expression, ubiquitously expressed.

The protein resides in the cytoplasm. Its subcellular location is the nucleus. In terms of biological role, prevents inappropriate targeting of non-secretory polypeptides to the endoplasmic reticulum (ER). Binds to nascent polypeptide chains as they emerge from the ribosome and blocks their interaction with the signal recognition particle (SRP), which normally targets nascent secretory peptides to the ER. Also reduces the inherent affinity of ribosomes for protein translocation sites in the ER membrane (M sites). May act as a specific coactivator for JUN, binding to DNA and stabilizing the interaction of JUN homodimers with target gene promoters. This is Nascent polypeptide-associated complex subunit alpha (NACA) from Homo sapiens (Human).